We begin with the raw amino-acid sequence, 604 residues long: Lipoma-preferred partner homolog (604 aa).

Disordered regions lie at residues 31–96 (TPSI…LDDV) and 129–381 (DLES…AFRP). Over residues 32–41 (PSISVSTQQT) the composition is skewed to polar residues. 2 stretches are compositionally biased toward low complexity: residues 42–53 (PKKFAPVVAPKP) and 143–161 (GSGT…TPVT). A compositionally biased stretch (polar residues) spans 207-226 (SYTTASTPSRPTFNVQVRTA). The span at 365–377 (SGYPSSGPTSSTP) shows a compositional bias: low complexity. LIM zinc-binding domains are found at residues 406–465 (GRCA…INTL), 466–526 (EQCS…KFAP), and 527–595 (RCSV…RIQA).

It belongs to the zyxin/ajuba family.

It localises to the nucleus. The protein localises to the cytoplasm. It is found in the cell junction. Functionally, may play a structural role at sites of cell adhesion in maintaining cell shape and motility. May be involved in signal transduction from cell adhesion sites to the nucleus. The sequence is that of Lipoma-preferred partner homolog (LPP) from Gallus gallus (Chicken).